An 89-amino-acid polypeptide reads, in one-letter code: Small ribosomal subunit protein uS15 (89 aa).

The protein belongs to the universal ribosomal protein uS15 family. Part of the 30S ribosomal subunit. Forms a bridge to the 50S subunit in the 70S ribosome, contacting the 23S rRNA.

One of the primary rRNA binding proteins, it binds directly to 16S rRNA where it helps nucleate assembly of the platform of the 30S subunit by binding and bridging several RNA helices of the 16S rRNA. Its function is as follows. Forms an intersubunit bridge (bridge B4) with the 23S rRNA of the 50S subunit in the ribosome. The polypeptide is Small ribosomal subunit protein uS15 (Pseudomonas fluorescens (strain ATCC BAA-477 / NRRL B-23932 / Pf-5)).